A 211-amino-acid polypeptide reads, in one-letter code: tRNA (guanine-N(7)-)-methyltransferase (211 aa).

The S-adenosyl-L-methionine site is built by E44, D69, D96, and D118. Residue D118 is part of the active site. K122 serves as a coordination point for substrate. The interaction with RNA stretch occupies residues 124-129 (RHEKRR). Residues D154 and 191–194 (TEYE) contribute to the substrate site.

This sequence belongs to the class I-like SAM-binding methyltransferase superfamily. TrmB family.

It catalyses the reaction guanosine(46) in tRNA + S-adenosyl-L-methionine = N(7)-methylguanosine(46) in tRNA + S-adenosyl-L-homocysteine. It participates in tRNA modification; N(7)-methylguanine-tRNA biosynthesis. Catalyzes the formation of N(7)-methylguanine at position 46 (m7G46) in tRNA. The sequence is that of tRNA (guanine-N(7)-)-methyltransferase from Streptococcus equi subsp. equi (strain 4047).